The primary structure comprises 395 residues: Acetate kinase (395 aa).

Position 7 (Asn7) interacts with Mg(2+). Lys14 provides a ligand contact to ATP. Arg85 serves as a coordination point for substrate. Catalysis depends on Asp142, which acts as the Proton donor/acceptor. ATP is bound by residues 202–206 (HLGNG), 277–279 (DMR), and 325–329 (GIGEN). Glu378 contributes to the Mg(2+) binding site.

The protein belongs to the acetokinase family. In terms of assembly, homodimer. Requires Mg(2+) as cofactor. The cofactor is Mn(2+).

The protein resides in the cytoplasm. It carries out the reaction acetate + ATP = acetyl phosphate + ADP. The protein operates within metabolic intermediate biosynthesis; acetyl-CoA biosynthesis; acetyl-CoA from acetate: step 1/2. Functionally, catalyzes the formation of acetyl phosphate from acetate and ATP. Can also catalyze the reverse reaction. This chain is Acetate kinase, found in Deinococcus geothermalis (strain DSM 11300 / CIP 105573 / AG-3a).